The following is a 332-amino-acid chain: Probable allantoicase (332 aa).

It belongs to the allantoicase family.

It carries out the reaction allantoate + H2O = (S)-ureidoglycolate + urea. Its pathway is nitrogen metabolism; (S)-allantoin degradation; (S)-ureidoglycolate from allantoate (aminidohydrolase route): step 1/1. This chain is Probable allantoicase, found in Pseudomonas paraeruginosa (strain DSM 24068 / PA7) (Pseudomonas aeruginosa (strain PA7)).